A 177-amino-acid polypeptide reads, in one-letter code: Large ribosomal subunit protein uL6 (177 aa).

Belongs to the universal ribosomal protein uL6 family. Part of the 50S ribosomal subunit.

Functionally, this protein binds to the 23S rRNA, and is important in its secondary structure. It is located near the subunit interface in the base of the L7/L12 stalk, and near the tRNA binding site of the peptidyltransferase center. In Sinorhizobium medicae (strain WSM419) (Ensifer medicae), this protein is Large ribosomal subunit protein uL6.